The chain runs to 489 residues: Betaine aldehyde dehydrogenase (489 aa).

K(+)-binding residues include Thr26 and Asp93. An NAD(+)-binding site is contributed by 150–152 (GAW). The active-site Charge relay system is the Lys162. An NAD(+)-binding site is contributed by 176-179 (KPSE). K(+) is bound at residue Val180. Residue 229–232 (GVET) participates in NAD(+) binding. Leu245 provides a ligand contact to K(+). Residue Glu251 is the Proton acceptor of the active site. 3 residues coordinate NAD(+): Gly253, Cys285, and Glu386. Residue Cys285 is the Nucleophile of the active site. Cysteine sulfenic acid (-SOH) is present on Cys285. K(+) is bound by residues Lys456 and Gly459. Glu463 acts as the Charge relay system in catalysis.

It belongs to the aldehyde dehydrogenase family. In terms of assembly, dimer of dimers. K(+) serves as cofactor.

It catalyses the reaction betaine aldehyde + NAD(+) + H2O = glycine betaine + NADH + 2 H(+). Its pathway is amine and polyamine biosynthesis; betaine biosynthesis via choline pathway; betaine from betaine aldehyde: step 1/1. Its function is as follows. Involved in the biosynthesis of the osmoprotectant glycine betaine. Catalyzes the irreversible oxidation of betaine aldehyde to the corresponding acid. The sequence is that of Betaine aldehyde dehydrogenase from Burkholderia vietnamiensis (strain G4 / LMG 22486) (Burkholderia cepacia (strain R1808)).